A 97-amino-acid chain; its full sequence is Apolipoprotein C-II (97 aa).

Positions 1 to 22 are cleaved as a signal peptide; sequence MGSRFFLALFLVLLVLGNEVQG. Residues 63-71 are lipid binding; sequence SVDEKLRDM. Residues 75-97 are lipoprotein lipase cofactor; the sequence is SSAAMSTYAGIFTDQLLTLLKGE.

This sequence belongs to the apolipoprotein C2 family. Proapolipoprotein C-II is synthesized as a sialic acid containing glycoprotein which is subsequently desialylated prior to its proteolytic processing. In terms of processing, proapolipoprotein C-II, the major form found in plasma undergoes proteolytic cleavage of its N-terminal hexapeptide to generate the mature form apolipoprotein C-II, which occurs as the minor form in plasma.

Its subcellular location is the secreted. In terms of biological role, component of chylomicrons, very low-density lipoproteins (VLDL), low-density lipoproteins (LDL), and high-density lipoproteins (HDL) in plasma. Plays an important role in lipoprotein metabolism as an activator of lipoprotein lipase. The polypeptide is Apolipoprotein C-II (Apoc2) (Grammomys surdaster (African woodland thicket rat)).